The sequence spans 1290 residues: Alpha-factor-transporting ATPase (1290 aa).

Residues 1–25 (MNFLSFKTTKHYHIFRYVNIRNDYR) lie on the Cytoplasmic side of the membrane. Residues 26–46 (LLMIMIIGTVATGLVPAITSI) form a helical membrane-spanning segment. One can recognise an ABC transmembrane type-1 1 domain in the interval 27 to 319 (LMIMIIGTVA…TLHQIVVLQK (293 aa)). The Extracellular portion of the chain corresponds to 47–75 (LTGRVFDLLSVFVANGSHQGLYSQLVQRS). An N-linked (GlcNAc...) asparagine glycan is attached at asparagine 61. The helical transmembrane segment at 76–96 (MAVMALGAASVPVMWLSLTSW) threads the bilayer. Residues 97–150 (MHIGERQGFRIRSQILEAYLEEKPMEWYDNNEKLLGDFTQINRCVEELRSSSAE) are Cytoplasmic-facing. The helical transmembrane segment at 151–171 (ASAITFQNLVAICALLGTSFY) threads the bilayer. Over 172-173 (YS) the chain is Extracellular. Residues 174–194 (WSLTLIILCSSPIITFFAVVF) form a helical membrane-spanning segment. Over 195 to 262 (SRMIHVYSEK…SCFFVAANAG (68 aa)) the chain is Cytoplasmic. A helical transmembrane segment spans residues 263–283 (ILRFLTLTMFVQGFWFGSAMI). Residues 284-296 (KKGKLNINDVITC) are Extracellular-facing. The chain crosses the membrane as a helical span at residues 297–317 (FHSCIMLGSTLNNTLHQIVVL). At 318–715 (QKGGVAMEKI…RMIKSIRYKK (398 aa)) the chain is on the cytoplasmic side. Residues 357–603 (LTFANVSFSY…PTTTFSTWYH (247 aa)) enclose the ABC transporter 1 domain. 392-399 (GKSGSGKS) is an ATP binding site. Residues 716-736 (ILILGLLCSLIAGATNPVFSY) traverse the membrane as a helical segment. The region spanning 717–1007 (LILGLLCSLI…LVSQIPDISR (291 aa)) is the ABC transmembrane type-1 2 domain. Residues 737 to 763 (TFSFLLEGIVPSTDGKTGSSHYLAKWS) are Extracellular-facing. A helical transmembrane segment spans residues 764–784 (LLVLGVAAADGIFNFAKGFLL). At 785-838 (DCCSEYWVMDLRNEVMEKLTRKNMDWFSGENNKASEISALVLNDLRDLRSLVSE) the chain is on the cytoplasmic side. The chain crosses the membrane as a helical span at residues 839 to 859 (FLSAMTSFVTVSTIGLIWALV). Residues 860 to 865 (SGWKLS) lie on the Extracellular side of the membrane. The helical transmembrane segment at 866–886 (LVCISMFPLIIIFSAIYGGIL) threads the bilayer. The Cytoplasmic portion of the chain corresponds to 887-945 (QKCETDYKTSVAQLENCLYQIVTNIKTIKCLQAEFHFQLTYHDLKIKMQQIASKRAIAT). The chain crosses the membrane as a helical span at residues 946–966 (GFGISMTNMIVMCIQAIIYYY). The Extracellular segment spans residues 967–981 (GLKLVMIHEYTSKEM). Residues 982 to 1002 (FTTFTLLLFTIMSCTSLVSQI) form a helical membrane-spanning segment. Topologically, residues 1003 to 1290 (PDISRGQRAA…LFQIVSNQSS (288 aa)) are cytoplasmic. Residue lysine 1022 forms a Glycyl lysine isopeptide (Lys-Gly) (interchain with G-Cter in ubiquitin) linkage. The ABC transporter 2 domain maps to 1052-1287 (VSIQNLTFAY…RGELFQIVSN (236 aa)). 1087 to 1094 (GESGTGKS) lines the ATP pocket.

The protein belongs to the ABC transporter superfamily. Alpha-factor sex pheromone exporter (TC 3.A.1.206) family. Post-translationally, degraded via the ubiquitin system.

It localises to the membrane. The catalysed reaction is an [alpha-factor](in) + ATP + H2O = an [alpha-factor](out) + ADP + phosphate + H(+). Functionally, STE6 is required in yeast MATA cells for production of A-factor pheromone. STE6 is involved in the transport of the farnesyl-derivation of the A-factor pheromone. The polypeptide is Alpha-factor-transporting ATPase (STE6) (Saccharomyces cerevisiae (strain ATCC 204508 / S288c) (Baker's yeast)).